The sequence spans 349 residues: tRNA N6-adenosine threonylcarbamoyltransferase (349 aa).

Fe cation contacts are provided by His-111 and His-115. Residues 134 to 138 (LVSGG), Asp-167, Gly-180, Asp-184, and Asn-279 each bind substrate. Asp-307 lines the Fe cation pocket.

The protein belongs to the KAE1 / TsaD family. It depends on Fe(2+) as a cofactor.

Its subcellular location is the cytoplasm. The catalysed reaction is L-threonylcarbamoyladenylate + adenosine(37) in tRNA = N(6)-L-threonylcarbamoyladenosine(37) in tRNA + AMP + H(+). Its function is as follows. Required for the formation of a threonylcarbamoyl group on adenosine at position 37 (t(6)A37) in tRNAs that read codons beginning with adenine. Is involved in the transfer of the threonylcarbamoyl moiety of threonylcarbamoyl-AMP (TC-AMP) to the N6 group of A37, together with TsaE and TsaB. TsaD likely plays a direct catalytic role in this reaction. This chain is tRNA N6-adenosine threonylcarbamoyltransferase, found in Nostoc punctiforme (strain ATCC 29133 / PCC 73102).